Consider the following 375-residue polypeptide: Actin-binding Rho-activating protein (375 aa).

The segment at 37 to 101 (ANENSTRQAQ…ATEVSHIKRK (65 aa)) is disordered. Positions 80 to 101 (PDGDREGRGSEEATEVSHIKRK) are enriched in basic and acidic residues. A phosphoserine mark is found at S150 and S182. The interval 175–197 (EPKWKSDSIDTEDSGYGGDMEER) is disordered. Actin-binding regions lie at residues 193–293 (DMEE…AERA) and 294–375 (KRAE…TLLE). Interaction with actin regions lie at residues 234–279 (SQVD…GDEG) and 346–375 (MRAR…TLLE).

Binds F-actin and ABLIM1, ABLIM2 and ABLIM3. Interaction with ABLIM2 and ABLIM3 enhances activity. In terms of tissue distribution, predominantly expressed in heart and skeletal muscle, and expressed at lower levels in adrenal gland, brain, kidney, liver, and testis.

The protein resides in the cytoplasm. The protein localises to the myofibril. It is found in the sarcomere. It localises to the cytoskeleton. Acts as an activator of serum response factor (SRF)-dependent transcription possibly by inducing nuclear translocation of MKL1 or MKL2 and through a mechanism requiring Rho-actin signaling. This is Actin-binding Rho-activating protein from Rattus norvegicus (Rat).